A 209-amino-acid polypeptide reads, in one-letter code: Mei4-dependent protein 1 (209 aa).

A signal peptide spans 1–22; the sequence is MLHATQLCYLLLFCFLPISISS.

The protein localises to the secreted. The sequence is that of Mei4-dependent protein 1 (mde1) from Schizosaccharomyces pombe (strain 972 / ATCC 24843) (Fission yeast).